The chain runs to 120 residues: Ribonuclease P protein component (120 aa).

Belongs to the RnpA family. As to quaternary structure, consists of a catalytic RNA component (M1 or rnpB) and a protein subunit.

It carries out the reaction Endonucleolytic cleavage of RNA, removing 5'-extranucleotides from tRNA precursor.. Functionally, RNaseP catalyzes the removal of the 5'-leader sequence from pre-tRNA to produce the mature 5'-terminus. It can also cleave other RNA substrates such as 4.5S RNA. The protein component plays an auxiliary but essential role in vivo by binding to the 5'-leader sequence and broadening the substrate specificity of the ribozyme. The chain is Ribonuclease P protein component from Mycobacterium marinum (strain ATCC BAA-535 / M).